The following is a 759-amino-acid chain: ARF GTPase-activating protein GIT2 (759 aa).

The Arf-GAP domain maps to 1–124 (MSKRLRSSEV…AFVHRLPCRD (124 aa)). A C4-type zinc finger spans residues 11–34 (CADCSGPDPSWASVNRGTFLCDEC). ANK repeat units follow at residues 132–161 (DLSKQLHSSVRTGNLETCLRLLSLGAQANF), 166–195 (KGNTPLHVASKAGQILQAELLAVYGADPGT), and 199–228 (SGKTPVDYARQGGHHELAERLVEIQYELTD). The interval 379–422 (QHSVESQDNDQPDYDSVASDEDTDLETTASKTNRQKSLDSDLSD) is disordered. Residues 385-403 (QDNDQPDYDSVASDEDTDL) are compositionally biased toward acidic residues. A phosphoserine mark is found at serine 394 and serine 397. Residue threonine 401 is modified to Phosphothreonine. 3 positions are modified to phosphoserine: serine 415, serine 418, and serine 421. Residues 437–478 (LVASEAKIQQLMKVNNNLSDELRIMQKKLQTLQSENSNLRKQ) are a coiled coil. The segment covering 480–499 (TTNVYQVQTGSEYTDTSNHS) has biased composition (polar residues). 2 disordered regions span residues 480-538 (TTNV…EESR) and 554-643 (VTSS…TEDV). Residue tyrosine 484 is modified to Phosphotyrosine. Low complexity predominate over residues 555 to 569 (TSSSSLPSFPSTLSW). Phosphoserine occurs at positions 559, 562, and 570. Positions 570–583 (SRDESARRASRLEK) are enriched in basic and acidic residues. A compositionally biased stretch (polar residues) spans 584 to 597 (QNSTPESDYDNTPN). Threonine 587 bears the Phosphothreonine mark. Position 614 is a phosphoserine (serine 614).

As to quaternary structure, may form heterooligomers with GIT1. Directly interacts with protein Piccolo/PCLO. Interacts with PPFIA1 and PPFIA2. Interacts with ARHGEF7. Identified in a complex with ARHGEF6 and BIN2. Interacts with PAK3. Interacts with PXN/paxillin. Interacts with TGFB1I1. Forms a complex with EFNB1 and GRB4/NCK2.

Its function is as follows. GTPase-activating protein for ADP ribosylation factor family members, including ARF1. This chain is ARF GTPase-activating protein GIT2 (GIT2), found in Homo sapiens (Human).